The sequence spans 252 residues: Electron transfer flavoprotein subunit beta (252 aa).

This sequence belongs to the ETF beta-subunit/FixA family. As to quaternary structure, heterodimer of an alpha and a beta subunit. AMP serves as cofactor.

The protein localises to the cytoplasm. The protein operates within lipid metabolism; butanoate metabolism. Its function is as follows. Part of an electron transfer flavoprotein involved in syntrophic growth of S.wolfei with butyrate. Probably receives electrons from butyryl-CoA dehydrogenases, and transfers them to the membrane-bound quinone oxidoreductase Swol_0698. This is Electron transfer flavoprotein subunit beta from Syntrophomonas wolfei subsp. wolfei (strain DSM 2245B / Goettingen).